The chain runs to 257 residues: Phosphonates import ATP-binding protein PhnC (257 aa).

The region spanning 4–248 (IEFKNVSKVY…VFSEIYGRTI (245 aa)) is the ABC transporter domain. Position 37 to 44 (37 to 44 (GLSGAGKS)) interacts with ATP.

It belongs to the ABC transporter superfamily. Phosphonates importer (TC 3.A.1.9.1) family. The complex is composed of two ATP-binding proteins (PhnC), two transmembrane proteins (PhnE) and a solute-binding protein (PhnD).

The protein resides in the cell membrane. It catalyses the reaction phosphonate(out) + ATP + H2O = phosphonate(in) + ADP + phosphate + H(+). Functionally, part of the ABC transporter complex PhnCDE involved in phosphonates import. Responsible for energy coupling to the transport system. This chain is Phosphonates import ATP-binding protein PhnC, found in Staphylococcus aureus (strain COL).